Here is a 521-residue protein sequence, read N- to C-terminus: Non-specific phospholipase C5 (521 aa).

Over residues 478–487 (SKKARERGGD) the composition is skewed to basic and acidic residues. The segment at 478–521 (SKKARERGGDENDIVFCVDDDDDHNVVKPPPSQSEPSHATPWSN) is disordered. Residues 511-521 (SEPSHATPWSN) are compositionally biased toward polar residues.

It belongs to the bacterial phospholipase C family. In terms of tissue distribution, specifically expressed in flowers.

The protein resides in the cytoplasm. It localises to the cytosol. It carries out the reaction a 1,2-diacyl-sn-glycero-3-phosphocholine + H2O = phosphocholine + a 1,2-diacyl-sn-glycerol + H(+). Non-specific phospholipase C (PLC) which assumes minor PLC activity during inorganic phosphate starvation. Can hydrolyze both phosphatidylcholine (PC) and phosphatidylethanolamine (PE). Required for normal accumulation of digalactosyldiacylglycerol (DGDG) during phosphate limitation and may contribute to the conversion of phospholipids to diacylglycerol, the substrate for galactolipid synthesis. The sequence is that of Non-specific phospholipase C5 (NPC5) from Arabidopsis thaliana (Mouse-ear cress).